The chain runs to 329 residues: Malate dehydrogenase (329 aa).

Residue 12-18 (GAAGQIG) participates in NAD(+) binding. R95 and R101 together coordinate substrate. Residues N108, Q115, and 132–134 (VGN) each bind NAD(+). 2 residues coordinate substrate: N134 and R165. The Proton acceptor role is filled by H190.

It belongs to the LDH/MDH superfamily. MDH type 2 family.

It catalyses the reaction (S)-malate + NAD(+) = oxaloacetate + NADH + H(+). Catalyzes the reversible oxidation of malate to oxaloacetate. The sequence is that of Malate dehydrogenase from Bordetella avium (strain 197N).